A 101-amino-acid polypeptide reads, in one-letter code: Large ribosomal subunit protein uL24 (101 aa).

The protein belongs to the universal ribosomal protein uL24 family. In terms of assembly, part of the 50S ribosomal subunit.

One of two assembly initiator proteins, it binds directly to the 5'-end of the 23S rRNA, where it nucleates assembly of the 50S subunit. Functionally, one of the proteins that surrounds the polypeptide exit tunnel on the outside of the subunit. The sequence is that of Large ribosomal subunit protein uL24 from Streptococcus thermophilus (strain ATCC BAA-491 / LMD-9).